The chain runs to 364 residues: Anhydro-N-acetylmuramic acid kinase (364 aa).

11–18 serves as a coordination point for ATP; it reads GSSLDGID.

The protein belongs to the anhydro-N-acetylmuramic acid kinase family.

The enzyme catalyses 1,6-anhydro-N-acetyl-beta-muramate + ATP + H2O = N-acetyl-D-muramate 6-phosphate + ADP + H(+). Its pathway is amino-sugar metabolism; 1,6-anhydro-N-acetylmuramate degradation. The protein operates within cell wall biogenesis; peptidoglycan recycling. In terms of biological role, catalyzes the specific phosphorylation of 1,6-anhydro-N-acetylmuramic acid (anhMurNAc) with the simultaneous cleavage of the 1,6-anhydro ring, generating MurNAc-6-P. Is required for the utilization of anhMurNAc either imported from the medium or derived from its own cell wall murein, and thus plays a role in cell wall recycling. This is Anhydro-N-acetylmuramic acid kinase from Pseudomonas savastanoi pv. phaseolicola (strain 1448A / Race 6) (Pseudomonas syringae pv. phaseolicola (strain 1448A / Race 6)).